We begin with the raw amino-acid sequence, 223 residues long: Ribose-5-phosphate isomerase A (223 aa).

Substrate is bound by residues 28–31 (TGTT), 81–84 (DSAD), and 94–97 (KGGG). Glu-103 serves as the catalytic Proton acceptor. Lys-121 contacts substrate.

Belongs to the ribose 5-phosphate isomerase family. As to quaternary structure, homodimer.

It catalyses the reaction aldehydo-D-ribose 5-phosphate = D-ribulose 5-phosphate. It functions in the pathway carbohydrate degradation; pentose phosphate pathway; D-ribose 5-phosphate from D-ribulose 5-phosphate (non-oxidative stage): step 1/1. Catalyzes the reversible conversion of ribose-5-phosphate to ribulose 5-phosphate. The chain is Ribose-5-phosphate isomerase A from Buchnera aphidicola subsp. Acyrthosiphon pisum (strain 5A).